Consider the following 295-residue polypeptide: Iodotyrosine deiodinase (295 aa).

The helical transmembrane segment at 3 to 23 (VFSSLTPVFVAVLCVIIGFLF) threads the bilayer. A disordered region spans residues 29–81 (KESRSKQKPSDQTARPWVDEDLQDDTEISTKDNEENNEDWMDTTDEENLPHVP). A compositionally biased stretch (acidic residues) spans 63–75 (ENNEDWMDTTDEE). FMN contacts are provided by residues 106–110 (RRSVR), Ser134, and 134–135 (SG). 3-iodo-L-tyrosine is bound by residues Ala136, Glu163, Tyr167, and Lys188. Residues 243–245 (TTT) and Arg285 each bind FMN.

It belongs to the nitroreductase family. FMN is required as a cofactor.

It localises to the membrane. The catalysed reaction is 2 iodide + L-tyrosine + 2 NADP(+) = 3,5-diiodo-L-tyrosine + 2 NADPH + H(+). The enzyme catalyses iodide + L-tyrosine + NADP(+) = 3-iodo-L-tyrosine + NADPH. It catalyses the reaction 3-iodo-L-tyrosine + iodide + NADP(+) = 3,5-diiodo-L-tyrosine + NADPH + H(+). It carries out the reaction L-tyrosine + chloride + NADP(+) = 3-chloro-L-tyrosine + NADPH. The catalysed reaction is bromide + L-tyrosine + NADP(+) = 3-bromo-L-tyrosine + NADPH. Its function is as follows. Catalyzes the dehalogenation of halotyrosines such as 3,5-diiodo-L-tyrosine. Likely to also catalyze the dehalogenation of other halotyrosines such as 3-bromo-L-tyrosine, 3-chloro-L-tyrosine and 3-iodo-L-tyrosine. The protein is Iodotyrosine deiodinase (iyd) of Danio rerio (Zebrafish).